A 258-amino-acid polypeptide reads, in one-letter code: MAVISMKELLEAGVHFGHQTRRWDPKMDEYIFTERNGIHIIDLQKTVKLVDEAYNFIRNASTDGANVLFVGTKKQASDAIAEEATRAGQYYINHRWLGGTLTNWNTIKTRIQRLKDLQTMAEDGTFEQLPKKEVVLLNKQREKLEKFLGGIQDMPGLPDVLFVVDPKKEEIAVKEANMLNIPVVAMIDTNANPDVVDVKIPANDDAIRAVRLITSKIADAVIEGRQGQDSAPEDAFVEGDENTESIEEIANIVEEGNN.

This sequence belongs to the universal ribosomal protein uS2 family.

The chain is Small ribosomal subunit protein uS2 from Leuconostoc mesenteroides subsp. mesenteroides (strain ATCC 8293 / DSM 20343 / BCRC 11652 / CCM 1803 / JCM 6124 / NCDO 523 / NBRC 100496 / NCIMB 8023 / NCTC 12954 / NRRL B-1118 / 37Y).